The primary structure comprises 636 residues: Probable potassium transport system protein Kup (636 aa).

A run of 12 helical transmembrane segments spans residues 22–42, 64–84, 115–135, 150–170, 182–202, 220–240, 261–281, 293–313, 351–371, 383–403, 408–428, and 433–453; these read VGLLVAAVGVVYGDIGTSPLY, ILSLILWSLLWVVSFKYVMFI, LMVICGLIGASLFYGDSMITP, FDGIDHWVVPISLVVLVALFL, LFGPIMVTWFVALGALGVHGI, FFVVHPGIGVAILGAVVLALT, WFILVLPALVLNYFGQGALLL, LLAPGWALLPLVGLATMATVI, IYIGAVNWTLMVGVVLLVIGF, VAVTGTMLMTTILVSAVMLLL, PLLAVPILVGFLFVDGLFFAA, and IVQGGAFPVLAGGVLYLLMST.

Belongs to the HAK/KUP transporter (TC 2.A.72) family.

The protein localises to the cell inner membrane. It carries out the reaction K(+)(in) + H(+)(in) = K(+)(out) + H(+)(out). Functionally, transport of potassium into the cell. Likely operates as a K(+):H(+) symporter. This chain is Probable potassium transport system protein Kup, found in Pseudomonas putida (strain ATCC 700007 / DSM 6899 / JCM 31910 / BCRC 17059 / LMG 24140 / F1).